We begin with the raw amino-acid sequence, 446 residues long: Tol-Pal system protein TolB (446 aa).

Residues 1 to 24 form the signal peptide; the sequence is MKRAFLSALSVGLAALFLTGPAQA.

Belongs to the TolB family. In terms of assembly, the Tol-Pal system is composed of five core proteins: the inner membrane proteins TolA, TolQ and TolR, the periplasmic protein TolB and the outer membrane protein Pal. They form a network linking the inner and outer membranes and the peptidoglycan layer.

It is found in the periplasm. In terms of biological role, part of the Tol-Pal system, which plays a role in outer membrane invagination during cell division and is important for maintaining outer membrane integrity. This Dinoroseobacter shibae (strain DSM 16493 / NCIMB 14021 / DFL 12) protein is Tol-Pal system protein TolB.